The chain runs to 205 residues: Holliday junction branch migration complex subunit RuvA (205 aa).

Residues 1-64 (MIGKLKGLID…EDQIKLFGFR (64 aa)) form a domain I region. The tract at residues 65–143 (SDLEREWFRL…GFASVDPAVA (79 aa)) is domain II. Positions 144-153 (HLSGAIEERS) are flexible linker. The interval 153 to 205 (SAPRPVADAISALVNLGYGQPQAAAAIAAAARSAGDAAQTAQLIKLGLKELSK) is domain III.

Belongs to the RuvA family. In terms of assembly, homotetramer. Forms an RuvA(8)-RuvB(12)-Holliday junction (HJ) complex. HJ DNA is sandwiched between 2 RuvA tetramers; dsDNA enters through RuvA and exits via RuvB. An RuvB hexamer assembles on each DNA strand where it exits the tetramer. Each RuvB hexamer is contacted by two RuvA subunits (via domain III) on 2 adjacent RuvB subunits; this complex drives branch migration. In the full resolvosome a probable DNA-RuvA(4)-RuvB(12)-RuvC(2) complex forms which resolves the HJ.

The protein localises to the cytoplasm. In terms of biological role, the RuvA-RuvB-RuvC complex processes Holliday junction (HJ) DNA during genetic recombination and DNA repair, while the RuvA-RuvB complex plays an important role in the rescue of blocked DNA replication forks via replication fork reversal (RFR). RuvA specifically binds to HJ cruciform DNA, conferring on it an open structure. The RuvB hexamer acts as an ATP-dependent pump, pulling dsDNA into and through the RuvAB complex. HJ branch migration allows RuvC to scan DNA until it finds its consensus sequence, where it cleaves and resolves the cruciform DNA. The sequence is that of Holliday junction branch migration complex subunit RuvA from Rhodopseudomonas palustris (strain BisA53).